We begin with the raw amino-acid sequence, 359 residues long: Squamosa promoter-binding-like protein 13A (359 aa).

The tract at residues 75 to 94 (AKPEGSRSSSSKRTRGNGVG) is disordered. The SBP-type zinc-finger motif lies at 98–175 (MPICLVDGCD…DGHNRRRRKP (78 aa)). The Zn(2+) site is built by Cys101, Cys106, Cys123, His126, Cys142, Cys145, His149, and Cys161. The Bipartite nuclear localization signal signature appears at 158–174 (KRSCRKRLDGHNRRRRK).

Zn(2+) serves as cofactor.

The protein localises to the nucleus. In terms of biological role, trans-acting factor that binds specifically to the consensus nucleotide sequence 5'-TNCGTACAA-3'. In Arabidopsis thaliana (Mouse-ear cress), this protein is Squamosa promoter-binding-like protein 13A (SPL13A).